The chain runs to 180 residues: Anaerobic nitrite reductase GLB0 (180 aa).

Residues 23–172 (TYSKENEQLV…LAEQVKAEMH (150 aa)) enclose the Globin domain. A Homodimerization motif is present at residues 56–60 (EIAPG). Positions 66, 80, 84, 114, 118, and 119 each coordinate heme b. Positions 126–138 (DDQFEIVKEAILY) match the Homodimerization motif.

The protein belongs to the plant globin family. In terms of assembly, homodimer. It depends on heme b as a cofactor.

The protein localises to the cytoplasm. The protein resides in the nucleus. It carries out the reaction Fe(III)-heme b-[protein] + nitric oxide + H2O = Fe(II)-heme b-[protein] + nitrite + 2 H(+). In terms of biological role, phytoglobin that reduces nitrite to nitric oxide (NO) under anoxic conditions (e.g. during flooding or in waterlogged soil). May not function as an oxygen storage or transport protein. Has an unusually high affinity for O(2) through an hexacoordinate heme iron because of a very low dissociation constant. The protein is Anaerobic nitrite reductase GLB0 of Physcomitrium patens (Spreading-leaved earth moss).